Reading from the N-terminus, the 456-residue chain is Perilipin-5 (456 aa).

Positions 1-20 (MSEDEAAQAPGPSLSEQDQQ) are disordered. The interval 1–108 (MSEDEAAQAP…KLEEKLPFLQ (108 aa)) is interaction with LIPE. The interval 1–173 (MSEDEAAQAP…HFLPMTEEEL (173 aa)) is essential for lipid droplet targeting. Phosphoserine occurs at positions 2, 148, and 324. Residues 185–456 (VGSVEEQRKH…KHTLMPELDF (272 aa)) form an interaction with PNPLA2 and ABHD5 region. A disordered region spans residues 420–456 (AWQAQHGEGTVLSGNIPEEEPEPPSRPKHTLMPELDF). Positions 438 to 456 (EEPEPPSRPKHTLMPELDF) are recruits mitochondria at the lipid droplet surface.

This sequence belongs to the perilipin family. As to quaternary structure, homooligomer. Interacts with PNPLA2; prevents interaction of PNPLA2 with ABHD5. Interacts with ABHD5; targets ABHD5 to lipid droplets and promotes interaction of ABHD5 with PNPLA2. Interacts with LIPE. Post-translationally, phosphorylated by PKA. Phosphorylated on serine in skeletal muscle at rest or upon lipolytic stimulation.

The protein localises to the lipid droplet. It localises to the cytoplasm. It is found in the mitochondrion. Functionally, lipid droplet-associated protein that maintains the balance between lipogenesis and lipolysis and also regulates fatty acid oxidation in oxidative tissues. Recruits mitochondria to the surface of lipid droplets and is involved in lipid droplet homeostasis by regulating both the storage of fatty acids in the form of triglycerides and the release of fatty acids for mitochondrial fatty acid oxidation. In lipid droplet triacylglycerol hydrolysis, plays a role as a scaffolding protein for three major key lipolytic players: ABHD5, PNPLA2 and LIPE. Reduces the triacylglycerol hydrolase activity of PNPLA2 by recruiting and sequestering PNPLA2 to lipid droplets. Phosphorylation by PKA enables lipolysis probably by promoting release of ABHD5 from the perilipin scaffold and by facilitating interaction of ABHD5 with PNPLA2. Also increases lipolysis through interaction with LIPE and upon PKA-mediated phosphorylation of LIPE. This chain is Perilipin-5 (Plin5), found in Ovis aries (Sheep).